The primary structure comprises 48 residues: Large ribosomal subunit protein bL33A (48 aa).

This sequence belongs to the bacterial ribosomal protein bL33 family.

The protein is Large ribosomal subunit protein bL33A of Streptococcus pyogenes serotype M28 (strain MGAS6180).